Here is a 250-residue protein sequence, read N- to C-terminus: Diphthine synthase (250 aa).

S-adenosyl-L-methionine is bound by residues Leu-9, Asp-85, Val-88, 113–114, Leu-165, Ala-202, and His-227; that span reads SI.

This sequence belongs to the diphthine synthase family. As to quaternary structure, homodimer.

The catalysed reaction is 2-[(3S)-amino-3-carboxypropyl]-L-histidyl-[translation elongation factor 2] + 3 S-adenosyl-L-methionine = diphthine-[translation elongation factor 2] + 3 S-adenosyl-L-homocysteine + 3 H(+). It participates in protein modification; peptidyl-diphthamide biosynthesis. In terms of biological role, S-adenosyl-L-methionine-dependent methyltransferase that catalyzes the trimethylation of the amino group of the modified target histidine residue in translation elongation factor 2 (EF-2), to form an intermediate called diphthine. The three successive methylation reactions represent the second step of diphthamide biosynthesis. In Methanoregula boonei (strain DSM 21154 / JCM 14090 / 6A8), this protein is Diphthine synthase.